A 435-amino-acid chain; its full sequence is F-box/FBD/LRR-repeat protein At5g44980 (435 aa).

The region spanning 3–49 (RDYISELPDSLLTQILLELRTKDSVKTSVLSKRWRNLWLNVPGLELF) is the F-box domain. LRR repeat units lie at residues 88-114 (CKGYRDRLMELIGTLVDHGLQHLYVFM), 138-162 (LHNVELKNSDFVVSLPCLKILKLEN), 165-190 (HGEDGPLVVEKLISGCSVLEDLELIR), 191-217 (PFDIRTHKVLLLLRVSSQTLKSFTLHF), 250-275 (VKNLSSLFSIDIGTKFNPLRHEDLRM), and 324-349 (MWSSSTHLLEAFLESCPNLKNLILEY). In terms of domain architecture, FBD spans 355 to 405 (REQVDFTNVPQCLISTLEYVEIKEPNEKSTIKLVNYFLENSAVLKKLTLRF).

This is F-box/FBD/LRR-repeat protein At5g44980 from Arabidopsis thaliana (Mouse-ear cress).